Reading from the N-terminus, the 63-residue chain is Large ribosomal subunit protein uL29 (63 aa).

Belongs to the universal ribosomal protein uL29 family.

This is Large ribosomal subunit protein uL29 from Colwellia psychrerythraea (strain 34H / ATCC BAA-681) (Vibrio psychroerythus).